A 484-amino-acid polypeptide reads, in one-letter code: tRNA sulfurtransferase (484 aa).

Residues 63-167 form the THUMP domain; sequence QAFGERLACI…GDKLYMVTKR (105 aa). ATP contacts are provided by residues 185–186, Lys-267, Gly-289, and Gln-298; that span reads LI. An intrachain disulfide couples Cys-346 to Cys-458. The 79-residue stretch at 406–484 folds into the Rhodanese domain; that stretch reads IDTNEVVIDI…GYHNVKVYRP (79 aa). Cys-458 functions as the Cysteine persulfide intermediate in the catalytic mechanism.

It belongs to the ThiI family.

The protein resides in the cytoplasm. The catalysed reaction is [ThiI sulfur-carrier protein]-S-sulfanyl-L-cysteine + a uridine in tRNA + 2 reduced [2Fe-2S]-[ferredoxin] + ATP + H(+) = [ThiI sulfur-carrier protein]-L-cysteine + a 4-thiouridine in tRNA + 2 oxidized [2Fe-2S]-[ferredoxin] + AMP + diphosphate. The enzyme catalyses [ThiS sulfur-carrier protein]-C-terminal Gly-Gly-AMP + S-sulfanyl-L-cysteinyl-[cysteine desulfurase] + AH2 = [ThiS sulfur-carrier protein]-C-terminal-Gly-aminoethanethioate + L-cysteinyl-[cysteine desulfurase] + A + AMP + 2 H(+). Its pathway is cofactor biosynthesis; thiamine diphosphate biosynthesis. Functionally, catalyzes the ATP-dependent transfer of a sulfur to tRNA to produce 4-thiouridine in position 8 of tRNAs, which functions as a near-UV photosensor. Also catalyzes the transfer of sulfur to the sulfur carrier protein ThiS, forming ThiS-thiocarboxylate. This is a step in the synthesis of thiazole, in the thiamine biosynthesis pathway. The sulfur is donated as persulfide by IscS. The polypeptide is tRNA sulfurtransferase (Shewanella sp. (strain MR-7)).